The following is a 487-amino-acid chain: Selenium-binding protein 2 (487 aa).

Ala-2 is subject to N-acetylalanine. Residues Cys-19 and Cys-20 each coordinate selenite.

This sequence belongs to the selenium-binding protein family. As to expression, mostly expressed in seedlings, leaves and stems, and, to a lower extent, in flowers and roots.

Its function is as follows. Required for the fusion of female gametophyte polar nuclei. In Arabidopsis thaliana (Mouse-ear cress), this protein is Selenium-binding protein 2 (SBP2).